The following is a 347-amino-acid chain: SUMO-activating enzyme subunit 1 (347 aa).

It belongs to the ubiquitin-activating E1 family. Heterodimer of sae1 and uba2/sae2. The heterodimer corresponds to the two domains that are encoded on a single polypeptide chain in ubiquitin-activating enzyme E1. Interacts with ube2i.

It is found in the nucleus. The protein operates within protein modification; protein sumoylation. Its function is as follows. The heterodimer acts as an E1 ligase for sumo1, sumo2, and sumo3. It mediates ATP-dependent activation of sumo proteins followed by formation of a thioester bond between a sumo protein and a conserved active site cysteine residue on uba2/sae2. The sequence is that of SUMO-activating enzyme subunit 1 (sae1) from Xenopus tropicalis (Western clawed frog).